The chain runs to 459 residues: Cysteine--tRNA ligase (459 aa).

Cys29 lines the Zn(2+) pocket. Residues 31–41 (VTTYDYCHIGH) carry the 'HIGH' region motif. Zn(2+)-binding residues include Cys210, His235, and Glu239. A 'KMSKS' region motif is present at residues 267–271 (KMSKS). Lys270 is a binding site for ATP.

Belongs to the class-I aminoacyl-tRNA synthetase family. In terms of assembly, monomer. Zn(2+) is required as a cofactor.

The protein resides in the cytoplasm. The enzyme catalyses tRNA(Cys) + L-cysteine + ATP = L-cysteinyl-tRNA(Cys) + AMP + diphosphate. This chain is Cysteine--tRNA ligase, found in Idiomarina loihiensis (strain ATCC BAA-735 / DSM 15497 / L2-TR).